The sequence spans 651 residues: Mitogen-activated protein kinase kinase kinase 3 (651 aa).

The region spanning 68–330 (WRKGELIGCG…ATELLQHPFV (263 aa)) is the Protein kinase domain. Residues 74–82 (IGCGAFGRV) and Lys97 contribute to the ATP site. Residues 105 to 130 (SASKEKTQGHIRELEEEVQLLKNLSH) adopt a coiled-coil conformation. Residues Lys108 and Lys110 each participate in a glycyl lysine isopeptide (Lys-Gly) (interchain with G-Cter in ubiquitin) cross-link. The Proton acceptor role is filled by Asp196. Residues 573–608 (MPSPLKSSKRTLNTSRVMQSGTEPTQVNESTKKGVN) form a disordered region. Residues 582-608 (RTLNTSRVMQSGTEPTQVNESTKKGVN) show a composition bias toward polar residues. Residues 618-641 (RKWEEELYEELERHRENLRHAGAG) adopt a coiled-coil conformation.

This sequence belongs to the protein kinase superfamily. STE Ser/Thr protein kinase family. MAP kinase kinase kinase subfamily. In terms of assembly, interacts with NACK2 and MKK6. Expressed in roots and flowers.

It is found in the cytoplasm. It localises to the cytoskeleton. It carries out the reaction L-seryl-[protein] + ATP = O-phospho-L-seryl-[protein] + ADP + H(+). It catalyses the reaction L-threonyl-[protein] + ATP = O-phospho-L-threonyl-[protein] + ADP + H(+). In terms of biological role, involved in cortical microtubules organization and stabilization by regulating the phosphorylation state of microtubule-associated proteins such as MAP65-1. The chain is Mitogen-activated protein kinase kinase kinase 3 (ANP3) from Arabidopsis thaliana (Mouse-ear cress).